The chain runs to 154 residues: SsrA-binding protein (154 aa).

A disordered region spans residues 126–154; sequence GKKKYDKREDMKKKEAQREVERAFRERQK. A compositionally biased stretch (basic and acidic residues) spans 131–154; sequence DKREDMKKKEAQREVERAFRERQK.

It belongs to the SmpB family.

It is found in the cytoplasm. In terms of biological role, required for rescue of stalled ribosomes mediated by trans-translation. Binds to transfer-messenger RNA (tmRNA), required for stable association of tmRNA with ribosomes. tmRNA and SmpB together mimic tRNA shape, replacing the anticodon stem-loop with SmpB. tmRNA is encoded by the ssrA gene; the 2 termini fold to resemble tRNA(Ala) and it encodes a 'tag peptide', a short internal open reading frame. During trans-translation Ala-aminoacylated tmRNA acts like a tRNA, entering the A-site of stalled ribosomes, displacing the stalled mRNA. The ribosome then switches to translate the ORF on the tmRNA; the nascent peptide is terminated with the 'tag peptide' encoded by the tmRNA and targeted for degradation. The ribosome is freed to recommence translation, which seems to be the essential function of trans-translation. The protein is SsrA-binding protein of Anoxybacillus flavithermus (strain DSM 21510 / WK1).